Reading from the N-terminus, the 155-residue chain is Late embryogenesis abundant protein 2 (155 aa).

Residues 1 to 155 form a disordered region; it reads MTSHDQSYRA…DKDHFPTNRH (155 aa). Composition is skewed to basic and acidic residues over residues 11 to 21 and 28 to 39; these read GEAKGRTEEKT and IEDKAQAAKEKA. The segment covering 40 to 78 has biased composition (low complexity); that stretch reads QQAAQTAKDKTSQTAQAAKEKTQQTAQAAKDKTQQTTQA. 2 consecutive repeat copies span residues 53 to 63 and 64 to 74. Residues 53–74 are 2 X 11 AA approximate tandem repeats of T-A-Q-A-A-K-E-K-T-Q-Q; it reads TAQAAKEKTQQTAQAAKDKTQQ. Over residues 79–95 the composition is skewed to basic and acidic residues; that stretch reads TKEKAQDTTGRAKEKGS. Residues 97 to 120 are compositionally biased toward polar residues; the sequence is MGQSTKETAQSGKDNSAGFLQQTG. The segment covering 144–155 has biased composition (basic and acidic residues); it reads DQDKDHFPTNRH.

It belongs to the LEA type 4 family. In terms of tissue distribution, highest expression is found in seeds. No expression detected in adult tissues.

The chain is Late embryogenesis abundant protein 2 from Cicer arietinum (Chickpea).